We begin with the raw amino-acid sequence, 110 residues long: Large ribosomal subunit protein uL22 (110 aa).

Belongs to the universal ribosomal protein uL22 family. As to quaternary structure, part of the 50S ribosomal subunit.

This protein binds specifically to 23S rRNA; its binding is stimulated by other ribosomal proteins, e.g. L4, L17, and L20. It is important during the early stages of 50S assembly. It makes multiple contacts with different domains of the 23S rRNA in the assembled 50S subunit and ribosome. In terms of biological role, the globular domain of the protein is located near the polypeptide exit tunnel on the outside of the subunit, while an extended beta-hairpin is found that lines the wall of the exit tunnel in the center of the 70S ribosome. This is Large ribosomal subunit protein uL22 from Paracidovorax citrulli (strain AAC00-1) (Acidovorax citrulli).